The primary structure comprises 166 residues: Phosphopantetheine adenylyltransferase (166 aa).

Residue Ser-9 participates in substrate binding. ATP is bound by residues 9 to 10 and His-17; that span reads SF. 3 residues coordinate substrate: Lys-41, Leu-74, and Lys-88. ATP-binding positions include 89 to 91, Glu-99, and 123 to 129; these read GLR and YIHLSST.

This sequence belongs to the bacterial CoaD family. Homohexamer. Mg(2+) serves as cofactor.

The protein localises to the cytoplasm. It carries out the reaction (R)-4'-phosphopantetheine + ATP + H(+) = 3'-dephospho-CoA + diphosphate. The protein operates within cofactor biosynthesis; coenzyme A biosynthesis; CoA from (R)-pantothenate: step 4/5. Functionally, reversibly transfers an adenylyl group from ATP to 4'-phosphopantetheine, yielding dephospho-CoA (dPCoA) and pyrophosphate. This chain is Phosphopantetheine adenylyltransferase, found in Pseudarthrobacter chlorophenolicus (strain ATCC 700700 / DSM 12829 / CIP 107037 / JCM 12360 / KCTC 9906 / NCIMB 13794 / A6) (Arthrobacter chlorophenolicus).